Reading from the N-terminus, the 133-residue chain is Profilin-3 (133 aa).

This sequence belongs to the profilin family. In terms of assembly, occurs in many kinds of cells as a complex with monomeric actin in a 1:1 ratio.

It is found in the cytoplasm. The protein localises to the cytoskeleton. Binds to actin and affects the structure of the cytoskeleton. At high concentrations, profilin prevents the polymerization of actin, whereas it enhances it at low concentrations. By binding to PIP2, it inhibits the formation of IP3 and DG. This Ambrosia artemisiifolia (Common ragweed) protein is Profilin-3.